We begin with the raw amino-acid sequence, 636 residues long: DNA-directed RNA polymerase subunit gamma (636 aa).

Cysteine 71, cysteine 73, cysteine 86, and cysteine 89 together coordinate Zn(2+). 3 residues coordinate Mg(2+): aspartate 467, aspartate 469, and aspartate 471.

It belongs to the RNA polymerase beta' chain family. RpoC1 subfamily. In cyanobacteria the RNAP catalytic core is composed of 2 alpha, 1 beta, 1 beta', 1 gamma and 1 omega subunit. When a sigma factor is associated with the core the holoenzyme is formed, which can initiate transcription. Mg(2+) is required as a cofactor. It depends on Zn(2+) as a cofactor.

It catalyses the reaction RNA(n) + a ribonucleoside 5'-triphosphate = RNA(n+1) + diphosphate. DNA-dependent RNA polymerase catalyzes the transcription of DNA into RNA using the four ribonucleoside triphosphates as substrates. This is DNA-directed RNA polymerase subunit gamma from Picosynechococcus sp. (strain ATCC 27264 / PCC 7002 / PR-6) (Agmenellum quadruplicatum).